Reading from the N-terminus, the 530-residue chain is BTB/POZ domain-containing protein 3 (530 aa).

The tract at residues K23 to G48 is disordered. Gly residues predominate over residues S36–G46. The BTB domain maps to A128–A198. Residues F243–Q308 enclose the BACK domain.

In terms of tissue distribution, in the somatosensory cortex, specifically expressed in spiny stellate neurons during barrel formation. Also expressed in the olfactory bulb, piriform cortex and hippocampus.

The protein resides in the cytoplasm. Its subcellular location is the cytosol. The protein localises to the nucleus. Acts as a key regulator of dendritic field orientation during development of sensory cortex. Also directs dendrites toward active axon terminals when ectopically expressed. This chain is BTB/POZ domain-containing protein 3 (Btbd3), found in Mus musculus (Mouse).